Here is a 314-residue protein sequence, read N- to C-terminus: Oxalate oxidoreductase subunit beta (314 aa).

[4Fe-4S] cluster-binding residues include Cys24, Cys27, Cys52, and Cys225.

In terms of assembly, dimer of heterotrimer of one alpha, one beta and one delta subunit. It depends on [4Fe-4S] cluster as a cofactor.

The enzyme catalyses oxidized 2[4Fe-4S]-[ferredoxin] + oxalate = reduced 2[4Fe-4S]-[ferredoxin] + 2 CO2. In terms of biological role, catalyzes the anaerobic oxidation of oxalate using a broad range of electron acceptors, including ferredoxin and the nickel-dependent carbon monoxide dehydrogenase. Does not require coenzyme A as cosubstrate. Enables anaerobic growth on oxalate which is used as energy source by the bacteria. In Moorella thermoacetica (strain ATCC 39073 / JCM 9320), this protein is Oxalate oxidoreductase subunit beta.